A 526-amino-acid polypeptide reads, in one-letter code: MLMLLVRGTHYENLRSKVVLPTPLGGRSTETFVSEFPGPDTGIRWRRSDEALRVNVGGVRRQLSARALARFPGTRLGRLQAAASEEQARRLCDDYDEAAREFYFDRHPGFFLSLLHFYRTGHLHVLDELCVFAFGQEADYWGLGENALAACCRARYLERRLTQPHAWDEDSDTPSSVDPCPDEISDVQRELARYGAARCGRLRRRLWLTMENPGYSLPSKLFSCVSISVVLASIAAMCIHSLPEYQAREAAAAVAAVAAGRSPEGVRDDPVLRRLEYFCIAWFSFEVSSRLLLAPSTRNFFCHPLNLIDIVSVLPFYLTLLAGVALGDQGGKEFGHLGKVVQVFRLMRIFRVLKLARHSTGLRSLGATLKHSYREVGILLLYLAVGVSVFSGVAYTAEKEEDVGFNTIPACWWWGTVSMTTVGYGDVVPVTVAGKLAASGCILGGILVVALPITIIFNKFSHFYRRQKALEAAVRNSNHREFEDLLSSVDGVSEASLETSRETSQEGRSADLESQAPSEPPHPQMY.

Topologically, residues 1–217 (MLMLLVRGTH…LTMENPGYSL (217 aa)) are cytoplasmic. Residues 218–239 (PSKLFSCVSISVVLASIAAMCI) traverse the membrane as a helical segment. The Extracellular portion of the chain corresponds to 240–270 (HSLPEYQAREAAAAVAAVAAGRSPEGVRDDP). Residues 271-293 (VLRRLEYFCIAWFSFEVSSRLLL) form a helical membrane-spanning segment. The Cytoplasmic portion of the chain corresponds to 294 to 304 (APSTRNFFCHP). A helical transmembrane segment spans residues 305–322 (LNLIDIVSVLPFYLTLLA). Over 323–337 (GVALGDQGGKEFGHL) the chain is Extracellular. The chain crosses the membrane as a helical; Voltage-sensor span at residues 338 to 358 (GKVVQVFRLMRIFRVLKLARH). The Cytoplasmic portion of the chain corresponds to 359 to 373 (STGLRSLGATLKHSY). Residues 374 to 395 (REVGILLLYLAVGVSVFSGVAY) traverse the membrane as a helical segment. The Extracellular portion of the chain corresponds to 396-408 (TAEKEEDVGFNTI). Positions 409–420 (PACWWWGTVSMT) form an intramembrane region, helical. Positions 421–426 (TVGYGD) match the Selectivity filter motif. The stretch at 421–428 (TVGYGDVV) is an intramembrane region. The Extracellular segment spans residues 429–435 (PVTVAGK). A helical membrane pass occupies residues 436–464 (LAASGCILGGILVVALPITIIFNKFSHFY). At 465–526 (RRQKALEAAV…PSEPPHPQMY (62 aa)) the chain is on the cytoplasmic side. A disordered region spans residues 491 to 526 (GVSEASLETSRETSQEGRSADLESQAPSEPPHPQMY). Basic and acidic residues predominate over residues 499–511 (TSRETSQEGRSAD).

The protein belongs to the potassium channel family. S (TC 1.A.1.2) subfamily. Kv9.1/KCNS1 sub-subfamily. In terms of assembly, heterotetramer with KCNB1. Heterotetramer with KCNB2. Does not form homomultimers.

It is found in the cell membrane. Functionally, potassium channel regulatory subunit that modulate the delayed rectifier voltage-gated potassium channel activity of KCNB1 and KCNB2 by altering their kinetics, expression levels, and shifting the half-inactivation potential to more polarized values. While it does not form functional channels on its own, it can form functional heterotetrameric channels with KCNB1 and KCNB2. Each regulatory subunit has unique regulatory properties that can lead to extensive inhibition, significant changes in kinetics, and/or substantial shifts in the voltage dependencies of the inactivation process. The polypeptide is Delayed-rectifier potassium channel regulatory subunit KCNS1 (Pan troglodytes (Chimpanzee)).